A 398-amino-acid polypeptide reads, in one-letter code: 1-deoxy-D-xylulose 5-phosphate reductoisomerase (398 aa).

NADPH-binding residues include Thr11, Gly12, Ser13, Ile14, Arg38, Asn39, and Asn125. 1-deoxy-D-xylulose 5-phosphate is bound at residue Lys126. Glu127 lines the NADPH pocket. Asp151 is a Mn(2+) binding site. The 1-deoxy-D-xylulose 5-phosphate site is built by Ser152, Glu153, Ser179, and His202. Glu153 contributes to the Mn(2+) binding site. Position 208 (Gly208) interacts with NADPH. Ser215, Asn220, Lys221, and Glu224 together coordinate 1-deoxy-D-xylulose 5-phosphate. Glu224 lines the Mn(2+) pocket.

It belongs to the DXR family. Mg(2+) is required as a cofactor. Requires Mn(2+) as cofactor.

It catalyses the reaction 2-C-methyl-D-erythritol 4-phosphate + NADP(+) = 1-deoxy-D-xylulose 5-phosphate + NADPH + H(+). The protein operates within isoprenoid biosynthesis; isopentenyl diphosphate biosynthesis via DXP pathway; isopentenyl diphosphate from 1-deoxy-D-xylulose 5-phosphate: step 1/6. Catalyzes the NADPH-dependent rearrangement and reduction of 1-deoxy-D-xylulose-5-phosphate (DXP) to 2-C-methyl-D-erythritol 4-phosphate (MEP). The polypeptide is 1-deoxy-D-xylulose 5-phosphate reductoisomerase (Burkholderia cenocepacia (strain HI2424)).